A 92-amino-acid chain; its full sequence is Small ribosomal subunit protein bS20 (92 aa).

The tract at residues 1–23 is disordered; the sequence is MANSPSAKKRAKQAEKRRSHNAS. The span at 7–20 shows a compositional bias: basic residues; the sequence is AKKRAKQAEKRRSH.

It belongs to the bacterial ribosomal protein bS20 family.

Functionally, binds directly to 16S ribosomal RNA. In Pseudomonas fluorescens (strain ATCC BAA-477 / NRRL B-23932 / Pf-5), this protein is Small ribosomal subunit protein bS20.